The following is a 654-amino-acid chain: Protein fem-1 homolog A-A (654 aa).

ANK repeat units lie at residues 2–31 (DLHTAVYNAAHDGKLPLLQKLLAGRGREEL), 40–70 (GGGTPLLIAARRGHLDVVEYLVDHCGASVEA), 82–111 (EGAPPLWAASAAGHLAVVRSLLRRGASVNR), 115–145 (TNSTPLRAACFDGHLDVVRYLVGEHKADLEV), 149–178 (HGHTCLMISCYKGHREIARYLLERGAQVNR), 182–211 (KGNTALHDCAESGSLEILQLLLGCHARMER), and 214–243 (YGMTPLLAASVTGHTNIVEYLIQEQPGHEQ). Residue Ser108 is modified to Phosphoserine. Residues 242–265 (EQLSGTELPGEGSSQVAGNHCSTP) are disordered. Polar residues predominate over residues 253–263 (GSSQVAGNHCS). TPR repeat units follow at residues 283–317 (VEALELLGATYVDKKRDLLGALKHWRRAMELRHQG) and 375–408 (SYYIRYRGAVYADSGNFERCIRLWKYALDMQQNN). ANK repeat units lie at residues 519–561 (NGFT…DPDS) and 565–594 (DNNTPLHIAAQNNCPAIMDALIEAGAHMDA). Ser608 is modified (phosphoserine).

The protein belongs to the fem-1 family. As to quaternary structure, component of a CRL2 E3 ubiquitin-protein ligase complex, also named ECS (Elongin BC-CUL2/5-SOCS-box protein) complex, composed of CUL2, Elongin BC (ELOB and ELOC), RBX1 and substrate-specific adapter FEM1A. Interacts with PTGER4. Interacts with NFKB1; the interaction is direct. Phosphorylated; highly phosphorylated in myoblasts and myotubes. Phosphorylation at Ser-108 and Ser-608 promote PGE2-EP4-mediated inhibition of inflammation. Dephosphorylated by protein phosphatase 2A (PP2A). Preferentially expressed in cardiac muscle, brain and liver (at protein level). Also expressed in skeletal muscle.

Its subcellular location is the mitochondrion. It localises to the cytoplasm. The protein operates within protein modification; protein ubiquitination. Functionally, substrate-recognition component of a Cul2-RING (CRL2) E3 ubiquitin-protein ligase complex of the DesCEND (destruction via C-end degrons) pathway, which recognizes a C-degron located at the extreme C terminus of target proteins, leading to their ubiquitination and degradation. The C-degron recognized by the DesCEND pathway is usually a motif of less than ten residues and can be present in full-length proteins, truncated proteins or proteolytically cleaved forms. The CRL2(FEM1A) complex specifically recognizes proteins with an arginine at the C-terminus: recognizes and binds proteins ending with -Lys/Arg-Xaa-Arg and -Lys/Arg-Xaa-Xaa-Arg C-degrons, such as SIL1 or OR51B2, leading to their ubiquitination and degradation. Involved in PGE2-EP4-mediated inhibition of inflammation of macrophages via interaction with NFKB1 and PTGER4. Promotes inflammation in brain microglia through MAP2K4/MKK4-mediated signaling. The polypeptide is Protein fem-1 homolog A-A (Mus musculus (Mouse)).